We begin with the raw amino-acid sequence, 279 residues long: Ribosomal RNA small subunit methyltransferase J (279 aa).

S-adenosyl-L-methionine contacts are provided by residues 138 to 139 (ER) and D194.

The protein belongs to the methyltransferase superfamily. RsmJ family.

The protein localises to the cytoplasm. The enzyme catalyses guanosine(1516) in 16S rRNA + S-adenosyl-L-methionine = N(2)-methylguanosine(1516) in 16S rRNA + S-adenosyl-L-homocysteine + H(+). Specifically methylates the guanosine in position 1516 of 16S rRNA. The protein is Ribosomal RNA small subunit methyltransferase J of Acinetobacter baumannii (strain SDF).